Consider the following 366-residue polypeptide: UDP-N-acetylglucosamine 2-epimerase (366 aa).

The active site involves histidine 206.

This sequence belongs to the UDP-N-acetylglucosamine 2-epimerase family. In terms of assembly, homodimer.

Its subcellular location is the cytoplasm. The catalysed reaction is UDP-N-acetyl-alpha-D-glucosamine = UDP-N-acetyl-alpha-D-mannosamine. Functionally, catalyzes the reversible epimerization at C-2 of UDP-N-acetylglucosamine (UDP-GlcNAc) to produce UDP-N-acetylmannosamine (UDP-ManNAc), the activated donor of ManNAc residues. This chain is UDP-N-acetylglucosamine 2-epimerase (wecB), found in Methanococcus maripaludis (strain DSM 14266 / JCM 13030 / NBRC 101832 / S2 / LL).